We begin with the raw amino-acid sequence, 378 residues long: Chaperone protein DnaJ (378 aa).

In terms of domain architecture, J spans 5–70; sequence DYYEVLGVAK…QKRAAYDQYG (66 aa). The segment at 138–216 adopts a CR-type zinc-finger fold; the sequence is GYDTQIRVPS…CHGSGKVKET (79 aa). Zn(2+)-binding residues include C151, C154, C168, C171, C190, C193, C204, and C207. 4 CXXCXGXG motif repeats span residues 151–158, 168–175, 190–197, and 204–211; these read CEVCHGSG, CPTCHGQG, CPKCHGTG, and CAHCHGSG.

It belongs to the DnaJ family. In terms of assembly, homodimer. It depends on Zn(2+) as a cofactor.

It is found in the cytoplasm. Participates actively in the response to hyperosmotic and heat shock by preventing the aggregation of stress-denatured proteins and by disaggregating proteins, also in an autonomous, DnaK-independent fashion. Unfolded proteins bind initially to DnaJ; upon interaction with the DnaJ-bound protein, DnaK hydrolyzes its bound ATP, resulting in the formation of a stable complex. GrpE releases ADP from DnaK; ATP binding to DnaK triggers the release of the substrate protein, thus completing the reaction cycle. Several rounds of ATP-dependent interactions between DnaJ, DnaK and GrpE are required for fully efficient folding. Also involved, together with DnaK and GrpE, in the DNA replication of plasmids through activation of initiation proteins. The polypeptide is Chaperone protein DnaJ (Burkholderia vietnamiensis (strain G4 / LMG 22486) (Burkholderia cepacia (strain R1808))).